Consider the following 417-residue polypeptide: Putative transporter AmpG 1 (417 aa).

12 consecutive transmembrane segments (helical) span residues 7-27, 42-62, 78-98, 104-124, 143-163, 171-191, 225-245, 273-293, 301-321, 328-348, 366-386, and 389-409; these read LCII…TGNT, IGIL…APIF, LSWI…FSFL, LLLF…QDTI, GIYI…AIYL, EIYK…IVGI, ALKP…LVLY, VGKF…GVIM, SIFL…FLEI, LLFI…TAYI, FLSS…GYMV, and FGWQ…LLIL.

Belongs to the major facilitator superfamily.

The protein resides in the cell inner membrane. This chain is Putative transporter AmpG 1 (ampG1), found in Rickettsia conorii (strain ATCC VR-613 / Malish 7).